A 431-amino-acid chain; its full sequence is Enolase (431 aa).

Gln-167 lines the (2R)-2-phosphoglycerate pocket. Catalysis depends on Glu-209, which acts as the Proton donor. Residues Asp-246, Glu-290, and Asp-317 each coordinate Mg(2+). Lys-342, Arg-371, Ser-372, and Lys-393 together coordinate (2R)-2-phosphoglycerate. Lys-342 functions as the Proton acceptor in the catalytic mechanism.

It belongs to the enolase family. As to quaternary structure, component of the RNA degradosome, a multiprotein complex involved in RNA processing and mRNA degradation. It depends on Mg(2+) as a cofactor.

The protein resides in the cytoplasm. It localises to the secreted. It is found in the cell surface. The enzyme catalyses (2R)-2-phosphoglycerate = phosphoenolpyruvate + H2O. The protein operates within carbohydrate degradation; glycolysis; pyruvate from D-glyceraldehyde 3-phosphate: step 4/5. Catalyzes the reversible conversion of 2-phosphoglycerate (2-PG) into phosphoenolpyruvate (PEP). It is essential for the degradation of carbohydrates via glycolysis. The protein is Enolase of Yersinia pestis bv. Antiqua (strain Antiqua).